Consider the following 266-residue polypeptide: Apolipoprotein A-I (266 aa).

An N-terminal signal peptide occupies residues 1 to 18 (MKAVVLTLAVLFLTGSQA). 2 tandem repeats follow at residues 67–88 (LKLL…EQIG) and 89–110 (PVTQ…QEMS). Residues 67–266 (LKLLDNWDSL…DEATKKLNSQ (200 aa)) are 10 X approximate tandem repeats. Met109 bears the Methionine sulfoxide mark. One copy of the 3; half-length repeat lies at 111–121 (KDLEEVKKKVQ). A run of 5 repeats spans residues 122 to 143 (PYLD…QKVA), 144 to 165 (PLGA…EKLS), 166 to 187 (PLAE…AQLA), 188 to 209 (PYSE…EGGG), and 210 to 231 (AALT…EKAK). One copy of the 9; half-length repeat lies at 232–242 (PALEDLRQGLL). Repeat unit 10 spans residues 243-266 (PVLENFRVSLLAAVDEATKKLNSQ).

Belongs to the apolipoprotein A1/A4/E family. As to quaternary structure, homodimer. Interacts with APOA1BP and CLU. Component of a sperm activating protein complex (SPAP), consisting of APOA1, an immunoglobulin heavy chain, an immunoglobulin light chain and albumin. Interacts with NDRG1. Interacts with SCGB3A2. Interacts with NAXE and YJEFN3. Glycosylated. In terms of processing, palmitoylated. Post-translationally, phosphorylation sites are present in the extracellular medium.

The protein resides in the secreted. Its function is as follows. Participates in the reverse transport of cholesterol from tissues to the liver for excretion by promoting cholesterol efflux from tissues and by acting as a cofactor for the lecithin cholesterol acyltransferase (LCAT). As part of the SPAP complex, activates spermatozoa motility. The protein is Apolipoprotein A-I (APOA1) of Mirounga angustirostris (Northern elephant seal).